The following is a 254-amino-acid chain: Cell division protein FtsQ (254 aa).

The Cytoplasmic segment spans residues 1-27 (MNILKRKTPQNIRFGEQKPKYYFHIRA). The helical transmembrane segment at 28 to 48 (FAVLLGVFFLLGVYFNWQSIL) threads the bilayer. Residues 49-254 (EKMDDKPISA…AGAAVGMVDR (206 aa)) lie on the Periplasmic side of the membrane. The 71-residue stretch at 54–124 (KPISAFALVG…NRLSIWVSEY (71 aa)) folds into the POTRA domain.

It belongs to the FtsQ/DivIB family. FtsQ subfamily. In terms of assembly, part of a complex composed of FtsB, FtsL and FtsQ.

The protein resides in the cell inner membrane. Functionally, essential cell division protein. May link together the upstream cell division proteins, which are predominantly cytoplasmic, with the downstream cell division proteins, which are predominantly periplasmic. May control correct divisome assembly. The polypeptide is Cell division protein FtsQ (Haemophilus influenzae (strain ATCC 51907 / DSM 11121 / KW20 / Rd)).